The sequence spans 384 residues: Lipid-A-disaccharide synthase (384 aa).

It belongs to the LpxB family.

The enzyme catalyses a lipid X + a UDP-2-N,3-O-bis[(3R)-3-hydroxyacyl]-alpha-D-glucosamine = a lipid A disaccharide + UDP + H(+). The protein operates within bacterial outer membrane biogenesis; LPS lipid A biosynthesis. Functionally, condensation of UDP-2,3-diacylglucosamine and 2,3-diacylglucosamine-1-phosphate to form lipid A disaccharide, a precursor of lipid A, a phosphorylated glycolipid that anchors the lipopolysaccharide to the outer membrane of the cell. This chain is Lipid-A-disaccharide synthase, found in Geobacter metallireducens (strain ATCC 53774 / DSM 7210 / GS-15).